Here is an 810-residue protein sequence, read N- to C-terminus: Protein kinase C-binding protein NELL1 (810 aa).

Positions methionine 1–glycine 21 are cleaved as a signal peptide. Residues asparagine 40, asparagine 53, asparagine 83, asparagine 224, asparagine 294, and asparagine 372 are each glycosylated (N-linked (GlcNAc...) asparagine). The Laminin G-like domain maps to glutamate 64 to cysteine 227. The 62-residue stretch at lysine 271–arginine 332 folds into the VWFC 1 domain. 3 disulfide bridges follow: cysteine 395–cysteine 407, cysteine 401–cysteine 416, and cysteine 418–cysteine 432. Positions 434, 435, and 437 each coordinate Ca(2+). The region spanning aspartate 434–threonine 475 is the EGF-like 1; calcium-binding domain. 15 cysteine pairs are disulfide-bonded: cysteine 438/cysteine 451, cysteine 445/cysteine 460, cysteine 462/cysteine 474, cysteine 480/cysteine 493, cysteine 487/cysteine 502, cysteine 504/cysteine 515, cysteine 519/cysteine 529, cysteine 523/cysteine 535, cysteine 537/cysteine 546, cysteine 553/cysteine 566, cysteine 560/cysteine 575, cysteine 577/cysteine 594, cysteine 600/cysteine 613, cysteine 607/cysteine 622, and cysteine 624/cysteine 630. Ca(2+) contacts are provided by asparagine 453, leucine 454, and leucine 457. The region spanning glutamate 476 to arginine 516 is the EGF-like 2; calcium-binding domain. Asparagine 511 is a glycosylation site (N-linked (GlcNAc...) asparagine). An EGF-like 3 domain is found at alanine 517 to glutamate 547. The region spanning aspartate 549–tyrosine 587 is the EGF-like 4; calcium-binding domain. N-linked (GlcNAc...) asparagine glycosylation occurs at asparagine 562. The EGF-like 5; calcium-binding domain occupies aspartate 596–serine 631. N-linked (GlcNAc...) asparagine glycosylation is present at asparagine 609. The VWFC 2 domain occupies serine 692–valine 750. 3 N-linked (GlcNAc...) asparagine glycosylation sites follow: asparagine 708, asparagine 732, and asparagine 758.

Homotrimer. Binds to PKC beta-1. Interacts with ATRAID; the interaction promotes osteoblast cell differentiation and mineralization. Interacts with ROBO3.

The protein resides in the cytoplasm. It localises to the nucleus envelope. It is found in the secreted. Its function is as follows. Plays a role in the control of cell growth and differentiation. Promotes osteoblast cell differentiation and terminal mineralization. This Homo sapiens (Human) protein is Protein kinase C-binding protein NELL1 (NELL1).